The sequence spans 480 residues: Probable tRNA N6-adenosine threonylcarbamoyltransferase, mitochondrial (480 aa).

Residues 1–86 (MVRLFLTLSP…NPNFDDNLVV (86 aa)) constitute a mitochondrion transit peptide. Residues histidine 194 and histidine 198 each contribute to the a divalent metal cation site. Substrate contacts are provided by residues 217 to 221 (LISGG), aspartate 250, glycine 265, glutamate 269, 373 to 374 (SN), and threonine 401. Aspartate 402 lines the a divalent metal cation pocket.

It belongs to the KAE1 / TsaD family. As to quaternary structure, homodimer. The cofactor is a divalent metal cation. In terms of tissue distribution, expressed in young developing leaves, roots, flowers and siliques.

It localises to the mitochondrion inner membrane. The catalysed reaction is L-threonylcarbamoyladenylate + adenosine(37) in tRNA = N(6)-L-threonylcarbamoyladenosine(37) in tRNA + AMP + H(+). Required for the formation of a threonylcarbamoyl group on adenosine at position 37 (t(6)A37) in mitochondrial tRNAs that read codons beginning with adenine. Probably involved in the transfer of the threonylcarbamoyl moiety of threonylcarbamoyl-AMP (TC-AMP) to the N6 group of A37. Involved in mitochondrial genome maintenance. May have a role in embryonic development in plants. The chain is Probable tRNA N6-adenosine threonylcarbamoyltransferase, mitochondrial from Arabidopsis thaliana (Mouse-ear cress).